A 72-amino-acid chain; its full sequence is Translation initiation factor IF-1 (72 aa).

In terms of domain architecture, S1-like spans 1–72 (MAKEDNIEMQ…SKGRIVFRSR (72 aa)).

Belongs to the IF-1 family. Component of the 30S ribosomal translation pre-initiation complex which assembles on the 30S ribosome in the order IF-2 and IF-3, IF-1 and N-formylmethionyl-tRNA(fMet); mRNA recruitment can occur at any time during PIC assembly.

It localises to the cytoplasm. In terms of biological role, one of the essential components for the initiation of protein synthesis. Stabilizes the binding of IF-2 and IF-3 on the 30S subunit to which N-formylmethionyl-tRNA(fMet) subsequently binds. Helps modulate mRNA selection, yielding the 30S pre-initiation complex (PIC). Upon addition of the 50S ribosomal subunit IF-1, IF-2 and IF-3 are released leaving the mature 70S translation initiation complex. The protein is Translation initiation factor IF-1 of Shewanella pealeana (strain ATCC 700345 / ANG-SQ1).